Consider the following 118-residue polypeptide: Holo-[acyl-carrier-protein] synthase (118 aa).

The Mg(2+) site is built by D8 and E60.

Belongs to the P-Pant transferase superfamily. AcpS family. Mg(2+) serves as cofactor.

Its subcellular location is the cytoplasm. It carries out the reaction apo-[ACP] + CoA = holo-[ACP] + adenosine 3',5'-bisphosphate + H(+). Its function is as follows. Transfers the 4'-phosphopantetheine moiety from coenzyme A to a Ser of acyl-carrier-protein. This chain is Holo-[acyl-carrier-protein] synthase, found in Wolbachia sp. subsp. Drosophila simulans (strain wRi).